A 244-amino-acid polypeptide reads, in one-letter code: Cell division protein ZapD (244 aa).

This sequence belongs to the ZapD family. Interacts with FtsZ.

Its subcellular location is the cytoplasm. In terms of biological role, cell division factor that enhances FtsZ-ring assembly. Directly interacts with FtsZ and promotes bundling of FtsZ protofilaments, with a reduction in FtsZ GTPase activity. In Shewanella baltica (strain OS223), this protein is Cell division protein ZapD.